A 253-amino-acid polypeptide reads, in one-letter code: Major prion protein (253 aa).

A signal peptide spans 1–22 (MANLGCWMLVLFVATWSDLGLC). An interaction with GRB2, ERI3 and SYN1 region spans residues 23–230 (KKRPKPGGWN…ESQAYYQRGS (208 aa)). The interval 26-108 (PKPGGWNTGG…WHKPSKPKTS (83 aa)) is disordered. Repeat copies occupy residues 51–59 (PQGGGGWGQ), 60–67 (PHGGGWGQ), 68–75 (PHGGGWGQ), 76–83 (PHGGGWGQ), and 84–91 (PHGGGWGQ). Residues 51–91 (PQGGGGWGQPHGGGWGQPHGGGWGQPHGGGWGQPHGGGWGQ) form a 5 X 8 AA tandem repeats of P-H-G-G-G-W-G-Q region. Gly residues predominate over residues 52–95 (QGGGGWGQPHGGGWGQPHGGGWGQPHGGGWGQPHGGGWGQGGGT). His61, Gly62, Gly63, His69, Gly70, Gly71, His77, Gly78, Gly79, His85, Gly86, and Gly87 together coordinate Cu(2+). Positions 98–108 (QWHKPSKPKTS) are enriched in basic residues. A disulfide bridge links Cys179 with Cys214. 2 N-linked (GlcNAc...) asparagine glycosylation sites follow: Asn181 and Asn197. Ser230 is lipidated: GPI-anchor amidated serine. The propeptide at 231–253 (SMVLFSSPPVILLISFLIFLIVG) is removed in mature form.

It belongs to the prion family. Monomer and homodimer. Has a tendency to aggregate into amyloid fibrils containing a cross-beta spine, formed by a steric zipper of superposed beta-strands. Soluble oligomers may represent an intermediate stage on the path to fibril formation. Copper binding may promote oligomerization. Interacts with GRB2, APP, ERI3/PRNPIP and SYN1. Mislocalized cytosolically exposed PrP interacts with MGRN1; this interaction alters MGRN1 subcellular location and causes lysosomal enlargement. Interacts with KIAA1191.

The protein localises to the cell membrane. It is found in the golgi apparatus. Functionally, its primary physiological function is unclear. Has cytoprotective activity against internal or environmental stresses. May play a role in neuronal development and synaptic plasticity. May be required for neuronal myelin sheath maintenance. May play a role in iron uptake and iron homeostasis. Soluble oligomers are toxic to cultured neuroblastoma cells and induce apoptosis (in vitro). Association with GPC1 (via its heparan sulfate chains) targets PRNP to lipid rafts. Also provides Cu(2+) or Zn(2+) for the ascorbate-mediated GPC1 deaminase degradation of its heparan sulfate side chains. This chain is Major prion protein (PRNP), found in Macaca fascicularis (Crab-eating macaque).